Here is a 734-residue protein sequence, read N- to C-terminus: ATP-dependent RNA helicase DDX50 (734 aa).

The segment at 1–131 (MPGKLLWGDI…KAEETLTREQ (131 aa)) is disordered. Acidic residues predominate over residues 11-20 (MELEAPLEES). Composition is skewed to basic and acidic residues over residues 38 to 51 (HSESEERTETRENG) and 67 to 86 (REKLNGDTKEGLRFSDEFSP). 6 positions are modified to phosphoserine: Ser-41, Ser-81, Ser-85, Ser-113, Ser-119, and Ser-120. Over residues 115-131 (NSHKSSDKAEETLTREQ) the composition is skewed to basic and acidic residues. Residue Lys-122 forms a Glycyl lysine isopeptide (Lys-Gly) (interchain with G-Cter in SUMO2) linkage. The short motif at 134–162 (GAFSNFSISEETIKLLKGRGVTYLFPIQV) is the Q motif element. The Helicase ATP-binding domain occupies 165-344 (FGPVYEGKDL…KKYMKSRYEQ (180 aa)). 178 to 185 (ARTGTGKT) contributes to the ATP binding site. At Thr-244 the chain carries Phosphothreonine. A DEVD box motif is present at residues 287-290 (DEVD). Residues 377 to 521 (DVLQVYSGSE…GVPSTMDLVK (145 aa)) form the Helicase C-terminal domain. At Ser-515 the chain carries Phosphoserine. The disordered stretch occupies residues 664-734 (YYDGNTSSNP…RSGGHKRNFD (71 aa)). Residues 679–698 (WSGGRSGRSGRSGGRSGGRS) are compositionally biased toward gly residues. A compositionally biased stretch (low complexity) spans 699 to 709 (GRQSRQGSRSG). Positions 717–734 (RSGNRNRSRSGGHKRNFD) are enriched in basic residues.

The protein belongs to the DEAD box helicase family. DDX21/DDX50 subfamily. Interacts with C1QBP. Interacts with the ubiquitin ligase CTLH complex through GID4. Interacts with TICAM1.

Its subcellular location is the nucleus. It localises to the nucleolus. It is found in the cytoplasm. It carries out the reaction ATP + H2O = ADP + phosphate + H(+). Its function is as follows. ATP-dependent RNA helicase that may play a role in various aspects of RNA metabolism including pre-mRNA splicing or ribosomal RNA production. Also acts as a viral restriction factor and promotes the activation of the NF-kappa-B and IRF3 signaling pathways following its stimulation with viral RNA or infection with RNA and DNA viruses. For instance, decreases vaccinia virus, herpes simplex virus, Zika virus or dengue virus replication during the early stage of infection. Mechanistically, acts via the adapter TICAM1 and independently of the DDX1-DDX21-DHX36 helicase complex to induce the production of interferon-beta. In Mus musculus (Mouse), this protein is ATP-dependent RNA helicase DDX50 (Ddx50).